A 337-amino-acid polypeptide reads, in one-letter code: MPRSFLVKSKKAHTYHQHRFVEDDLPIFTWDPITSAFTAAGDRDKTPEDGKKQDLEWVVPKQEKDSFQPKEESVPVQYLSRMLPGPSAQDMSISGLQVKDCTNPTSMPTFYKTGFSWDAFQLPYSYRQMSSTMQSALLEHPVSLYGSHLLPSAEPPLDYSMRYSSDMETYHCVKCNKVFSTPHGLEVHVRRSHSGTRPFACEVCGKTFGHAVSLEQHTNIHSQERSFECKMCGKTFKRSSTLSTHLLIHSDTRPYPCQYCGKRFHQKSDMKKHTYIHTGEKPHKCQVCGKAFSQSSNLITHSRKHTGFKPFSCELCAKGFQRKVDLRRHRETQHSLK.

The segment at M1 to F20 is mediates repression of transcription. Residues M1–F20 are SNAG domain. 6 consecutive C2H2-type zinc fingers follow at residues Y170–H193, F199–H221, F227–H249, Y255–H277, H283–H305, and F311–H334.

As to expression, expressed in erythroid cells of primitive and definitive lineage and bone marrow cells.

The protein localises to the nucleus. Functionally, essential transcriptional regulator necessary for development and differentiation of erythroid and megakaryocytic lineages. Alters histone methylation by recruiting histone methyltransferase to target genes promoters. Plays a role in heterochromatin formation. The polypeptide is Zinc finger protein Gfi-1b (GFI1B) (Gallus gallus (Chicken)).